Reading from the N-terminus, the 172-residue chain is Disulfide bond formation protein B (172 aa).

Over 1–11 (MNPFRWSFRAQ) the chain is Cytoplasmic. Residues 12-28 (FLLGFLACAGLLAYAIY) form a helical membrane-spanning segment. At 29–46 (VQLHLGLEPCPLCIFQRI) the chain is on the periplasmic side. Residues Cys-38 and Cys-41 are joined by a disulfide bond. The chain crosses the membrane as a helical span at residues 47-63 (AFAALAVFFLLGALHGP). At 64–70 (RAAAGRK) the chain is on the cytoplasmic side. Residues 71–88 (VYGVLSFIAAGVGMGIAA) traverse the membrane as a helical segment. Residues 89 to 145 (RHVWVQIRPKDMMSSCGPPLSFLSETMGPFEVFRTVLTGTGDCGNIDWRFLGLSMPM) lie on the Periplasmic side of the membrane. Cys-104 and Cys-131 are joined by a disulfide. The chain crosses the membrane as a helical span at residues 146–164 (WSMVWFVGLALWALYAGFK). At 165–172 (VRRSSVHH) the chain is on the cytoplasmic side.

This sequence belongs to the DsbB family.

It is found in the cell inner membrane. Functionally, required for disulfide bond formation in some periplasmic proteins. Acts by oxidizing the DsbA protein. The chain is Disulfide bond formation protein B from Xanthomonas axonopodis pv. citri (strain 306).